The sequence spans 216 residues: ATP phosphoribosyltransferase (216 aa).

This sequence belongs to the ATP phosphoribosyltransferase family. Short subfamily. In terms of assembly, heteromultimer composed of HisG and HisZ subunits.

It localises to the cytoplasm. The enzyme catalyses 1-(5-phospho-beta-D-ribosyl)-ATP + diphosphate = 5-phospho-alpha-D-ribose 1-diphosphate + ATP. Its pathway is amino-acid biosynthesis; L-histidine biosynthesis; L-histidine from 5-phospho-alpha-D-ribose 1-diphosphate: step 1/9. Functionally, catalyzes the condensation of ATP and 5-phosphoribose 1-diphosphate to form N'-(5'-phosphoribosyl)-ATP (PR-ATP). Has a crucial role in the pathway because the rate of histidine biosynthesis seems to be controlled primarily by regulation of HisG enzymatic activity. In Prochlorococcus marinus (strain MIT 9211), this protein is ATP phosphoribosyltransferase.